The chain runs to 606 residues: Aspartate--tRNA(Asp/Asn) ligase (606 aa).

Glu175 is a binding site for L-aspartate. The interval 199 to 202 (QLFK) is aspartate. Position 221 (Arg221) interacts with L-aspartate. Residues 221–223 (RDE) and Gln230 contribute to the ATP site. His453 lines the L-aspartate pocket. An ATP-binding site is contributed by Glu487. An L-aspartate-binding site is contributed by Arg494. 539 to 542 (GWDR) lines the ATP pocket. A disordered region spans residues 564–606 (GGVDPLTDAPGTIPAEQRKETGVDFKPEKAAKAAQGEKAGKES). Basic and acidic residues predominate over residues 579–594 (EQRKETGVDFKPEKAA).

The protein belongs to the class-II aminoacyl-tRNA synthetase family. Type 1 subfamily. Homodimer.

The protein resides in the cytoplasm. It catalyses the reaction tRNA(Asx) + L-aspartate + ATP = L-aspartyl-tRNA(Asx) + AMP + diphosphate. Its function is as follows. Aspartyl-tRNA synthetase with relaxed tRNA specificity since it is able to aspartylate not only its cognate tRNA(Asp) but also tRNA(Asn). Reaction proceeds in two steps: L-aspartate is first activated by ATP to form Asp-AMP and then transferred to the acceptor end of tRNA(Asp/Asn). The sequence is that of Aspartate--tRNA(Asp/Asn) ligase from Corynebacterium aurimucosum (strain ATCC 700975 / DSM 44827 / CIP 107346 / CN-1) (Corynebacterium nigricans).